A 1572-amino-acid chain; its full sequence is Dynein axonemal assembly factor 8 (1572 aa).

Disordered regions lie at residues 1–21 (MASE…NWSG), 262–304 (SEEV…HPQS), 324–428 (SLEQ…EILQ), and 849–871 (FQNP…SDSE). Residues 324 to 335 (SLEQNPENPSQR) show a composition bias toward polar residues. Residues 336 to 351 (NEQKEKHHLNKTDHTG) are compositionally biased toward basic and acidic residues. The segment covering 361–374 (NIQNDSLSDANMSN) has biased composition (polar residues). Basic and acidic residues predominate over residues 409 to 426 (VGREEKDGREEQEKEKEI). Polar residues predominate over residues 849–865 (FQNPYSRSTQPRSANLR). Residues 1249 to 1382 (TVLLLKPRIW…IRDIKTFFPE (134 aa)) form an NDK region.

Interacts with DNAI2. Expression is enriched in multiciliated cells in the epidermis and the nephrostomes of the pronephros.

Its subcellular location is the dynein axonemal particle. It is found in the cytoplasm. Functionally, in cyliated cells, dynein axonemal particle-specific protein required for deployment of ODA to the axoneme. Interacts with outer dynein arm (ODA) subunits. This Xenopus laevis (African clawed frog) protein is Dynein axonemal assembly factor 8 (dnaaf8).